Here is a 252-residue protein sequence, read N- to C-terminus: Urease accessory protein UreD (252 aa).

Belongs to the UreD family. As to quaternary structure, ureD, UreF and UreG form a complex that acts as a GTP-hydrolysis-dependent molecular chaperone, activating the urease apoprotein by helping to assemble the nickel containing metallocenter of UreC. The UreE protein probably delivers the nickel.

The protein localises to the cytoplasm. Its function is as follows. Required for maturation of urease via the functional incorporation of the urease nickel metallocenter. This Streptomyces avermitilis (strain ATCC 31267 / DSM 46492 / JCM 5070 / NBRC 14893 / NCIMB 12804 / NRRL 8165 / MA-4680) protein is Urease accessory protein UreD.